The sequence spans 438 residues: Sphingomyelinase phosphodiesterase D (438 aa).

The first 17 residues, 1 to 17, serve as a signal peptide directing secretion; it reads MKIILILVLVLVVSINA. Zn(2+) is bound by residues aspartate 27 and histidine 29. Asparagine 40 is a glycosylation site (N-linked (GlcNAc...) asparagine). Positions 111 and 148 each coordinate Zn(2+). A glycan (N-linked (GlcNAc...) asparagine) is linked at asparagine 160. Histidine 247 contributes to the Zn(2+) binding site. Residue asparagine 271 is glycosylated (N-linked (GlcNAc...) asparagine). Zn(2+) is bound by residues histidine 287 and histidine 289. Asparagine 338 and asparagine 359 each carry an N-linked (GlcNAc...) asparagine glycan.

It belongs to the acid sphingomyelinase family. It depends on Zn(2+) as a cofactor.

The protein localises to the secreted. The polypeptide is Sphingomyelinase phosphodiesterase D (sgmD) (Dictyostelium discoideum (Social amoeba)).